A 641-amino-acid chain; its full sequence is Sodium-dependent nutrient amino acid transporter 1 (641 aa).

Residues 1-34 (MELKGVQPSNGSANGNGTTNAASTEKADTEKQTA) are disordered. Over 1-38 (MELKGVQPSNGSANGNGTTNAASTEKADTEKQTAERTN) the chain is Cytoplasmic. Residues 9–24 (SNGSANGNGTTNAAST) are compositionally biased toward low complexity. The span at 25 to 34 (EKADTEKQTA) shows a compositional bias: basic and acidic residues. The next 3 membrane-spanning stretches (helical) occupy residues 39–59 (WGNG…LGNV), 72–92 (GAFL…MYYL), and 109–129 (SVVP…ICII). N-linked (GlcNAc...) asparagine glycans are attached at residues Asn-183 and Asn-188. Helical transmembrane passes span 229–249 (PDWK…LVIM), 258–278 (AAYF…IRAV), 307–327 (AVVQ…MFAS), 341–361 (IVTT…FAIL), 401–421 (LFSV…IVAL), 441–461 (VALI…TPGG), 474–494 (TYVV…VYGL), 516–536 (CWSF…MATI), and 552–572 (IAGW…GLWY).

Belongs to the sodium:neurotransmitter symporter (SNF) (TC 2.A.22) family.

It localises to the membrane. Functionally, unusual broad substrate spectrum amino acid:sodium cotransporter that promotes absorption of the D isomers of essential amino acids. Neutral amino acids are the preferred substrates, especially methionine and phenylalanine. This is Sodium-dependent nutrient amino acid transporter 1 from Drosophila yakuba (Fruit fly).